Consider the following 419-residue polypeptide: Tyrosine--tRNA ligase 1 (419 aa).

Residue Tyr-35 coordinates L-tyrosine. The 'HIGH' region motif lies at 40 to 49 (PTAGSLHIGH). L-tyrosine-binding residues include Tyr-172 and Gln-176. The 'KMSKS' region motif lies at 232–236 (KFGKT). Lys-235 serves as a coordination point for ATP. The region spanning 353–418 (QDLVELLIES…KKHFCLVKRA (66 aa)) is the S4 RNA-binding domain.

It belongs to the class-I aminoacyl-tRNA synthetase family. TyrS type 1 subfamily. Homodimer.

The protein resides in the cytoplasm. The enzyme catalyses tRNA(Tyr) + L-tyrosine + ATP = L-tyrosyl-tRNA(Tyr) + AMP + diphosphate + H(+). Functionally, catalyzes the attachment of tyrosine to tRNA(Tyr) in a two-step reaction: tyrosine is first activated by ATP to form Tyr-AMP and then transferred to the acceptor end of tRNA(Tyr). The sequence is that of Tyrosine--tRNA ligase 1 from Vibrio parahaemolyticus serotype O3:K6 (strain RIMD 2210633).